The primary structure comprises 365 residues: Glucose 1-dehydrogenase 1 (365 aa).

Position 38 (D38) interacts with Zn(2+). T40 contacts substrate. H63 and E64 together coordinate Zn(2+). The substrate site is built by E115 and E151. E151 is a binding site for Zn(2+). Residues 182 to 185 (NGSL), 207 to 208 (RR), 272 to 274 (LGV), and 301 to 303 (SVN) each bind NADP(+). Residue N303 participates in substrate binding.

Belongs to the zinc-containing alcohol dehydrogenase family. Glucose 1-dehydrogenase subfamily. Requires Zn(2+) as cofactor.

It catalyses the reaction D-glucose + NAD(+) = D-glucono-1,5-lactone + NADH + H(+). It carries out the reaction D-glucose + NADP(+) = D-glucono-1,5-lactone + NADPH + H(+). In terms of biological role, catalyzes the NAD(P)(+)-dependent oxidation of D-glucose to D-gluconate via gluconolactone. Can utilize both NAD(+) and NADP(+) as electron acceptor. Is involved in the degradation of glucose through a modified Entner-Doudoroff pathway. This Haloterrigena turkmenica (strain ATCC 51198 / DSM 5511 / JCM 9101 / NCIMB 13204 / VKM B-1734 / 4k) (Halococcus turkmenicus) protein is Glucose 1-dehydrogenase 1.